The following is a 378-amino-acid chain: Queuine tRNA-ribosyltransferase (378 aa).

The active-site Proton acceptor is the Asp-91. Substrate is bound by residues 91–95, Asp-145, Gln-197, and Gly-224; that span reads DSGGF. The Nucleophile role is filled by Asp-274. Positions 279–283 are RNA binding; important for wobble base 34 recognition; the sequence is TRLAR. 4 residues coordinate Zn(2+): Cys-312, Cys-314, Cys-317, and His-343.

The protein belongs to the queuine tRNA-ribosyltransferase family. In terms of assembly, homodimer. Within each dimer, one monomer is responsible for RNA recognition and catalysis, while the other monomer binds to the replacement base PreQ1. Zn(2+) serves as cofactor.

The enzyme catalyses 7-aminomethyl-7-carbaguanine + guanosine(34) in tRNA = 7-aminomethyl-7-carbaguanosine(34) in tRNA + guanine. It functions in the pathway tRNA modification; tRNA-queuosine biosynthesis. In terms of biological role, catalyzes the base-exchange of a guanine (G) residue with the queuine precursor 7-aminomethyl-7-deazaguanine (PreQ1) at position 34 (anticodon wobble position) in tRNAs with GU(N) anticodons (tRNA-Asp, -Asn, -His and -Tyr). Catalysis occurs through a double-displacement mechanism. The nucleophile active site attacks the C1' of nucleotide 34 to detach the guanine base from the RNA, forming a covalent enzyme-RNA intermediate. The proton acceptor active site deprotonates the incoming PreQ1, allowing a nucleophilic attack on the C1' of the ribose to form the product. After dissociation, two additional enzymatic reactions on the tRNA convert PreQ1 to queuine (Q), resulting in the hypermodified nucleoside queuosine (7-(((4,5-cis-dihydroxy-2-cyclopenten-1-yl)amino)methyl)-7-deazaguanosine). This Methylacidiphilum infernorum (isolate V4) (Methylokorus infernorum (strain V4)) protein is Queuine tRNA-ribosyltransferase.